A 192-amino-acid chain; its full sequence is uncharacterized protein (192 aa).

Residues 29–160 enclose the Nudix hydrolase domain; it reads HRQAAVLIPI…PLDIYRRGDS (132 aa). Residues 67-89 carry the Nudix box motif; it reads GAVDDTDASVIAAALREAEEEVA. Residues Glu83 and Glu87 each contribute to the Mg(2+) site.

Belongs to the Nudix hydrolase family. PCD1 subfamily. It depends on Mn(2+) as a cofactor. Requires Mg(2+) as cofactor.

Its function is as follows. Probably mediates the hydrolysis of some nucleoside diphosphate derivatives. This is an uncharacterized protein from Escherichia coli (strain SMS-3-5 / SECEC).